Consider the following 113-residue polypeptide: MLPTRHRMRTSAHFSTTVRSGARGGRRNVVVSVRLSTGAPSRVGFVVSKAVGNAVTRNKVKRRLRELSAETVRERPEGMDLVVRALPPAATAPWDELARDYRSAVATAVRRCA.

Residues 1 to 10 (MLPTRHRMRT) are compositionally biased toward basic residues. The tract at residues 1–23 (MLPTRHRMRTSAHFSTTVRSGAR) is disordered.

It belongs to the RnpA family. Consists of a catalytic RNA component (M1 or rnpB) and a protein subunit.

The catalysed reaction is Endonucleolytic cleavage of RNA, removing 5'-extranucleotides from tRNA precursor.. Its function is as follows. RNaseP catalyzes the removal of the 5'-leader sequence from pre-tRNA to produce the mature 5'-terminus. It can also cleave other RNA substrates such as 4.5S RNA. The protein component plays an auxiliary but essential role in vivo by binding to the 5'-leader sequence and broadening the substrate specificity of the ribozyme. The chain is Ribonuclease P protein component from Kocuria rhizophila (strain ATCC 9341 / DSM 348 / NBRC 103217 / DC2201).